We begin with the raw amino-acid sequence, 257 residues long: Fructose-2,6-bisphosphatase TIGAR B (257 aa).

Residue histidine 11 is the Tele-phosphohistidine intermediate of the active site. Glutamate 89 serves as the catalytic Proton donor/acceptor.

Belongs to the phosphoglycerate mutase family.

It is found in the cytoplasm. The protein resides in the nucleus. It localises to the mitochondrion. The enzyme catalyses beta-D-fructose 2,6-bisphosphate + H2O = beta-D-fructose 6-phosphate + phosphate. Functionally, fructose-bisphosphatase hydrolyzing fructose-2,6-bisphosphate as well as fructose-1,6-bisphosphate. Acts as a negative regulator of glycolysis by lowering intracellular levels of fructose-2,6-bisphosphate in a p53/TP53-dependent manner, resulting in the pentose phosphate pathway (PPP) activation and NADPH production. Contributes to the generation of reduced glutathione to cause a decrease in intracellular reactive oxygen species (ROS) content, correlating with its ability to protect cells from oxidative or metabolic stress-induced cell death. May play a role in mitophagy inhibition. This is Fructose-2,6-bisphosphatase TIGAR B from Danio rerio (Zebrafish).